A 315-amino-acid polypeptide reads, in one-letter code: Rhomboid-related protein 4 (315 aa).

Topologically, residues 1–21 (MQRRTRGINTGLLLLLSQVFQ) are cytoplasmic. The helical transmembrane segment at 22–42 (IGINNIPPVTLATLAVNVWFF) threads the bilayer. The Lumenal segment spans residues 43 to 103 (LNPWKPLYHS…KLERRLGSRW (61 aa)). The helical transmembrane segment at 104-124 (FAYVIATFSLLTGVVYLLLQF) threads the bilayer. Topologically, residues 125 to 137 (TVAELLNQPDFKR) are cytoplasmic. Residues 138-154 (NCAVGFSGVLFALKVLS) form a helical membrane-spanning segment. The active-site Nucleophile is the S144. The Lumenal segment spans residues 155–180 (NHYCPGGFVNILGFPVPNRFACWAEL). The helical transmembrane segment at 181–201 (VAIHFCTPGTSFAGHLAGILV) threads the bilayer. The active site involves H195. Topologically, residues 202 to 315 (GLMYTQGPLK…RQRLHRFDGQ (114 aa)) are cytoplasmic. The ubiquitin-binding domain (UBD) stretch occupies residues 269–284 (SEEEQLERALRASIWD). The segment at 301-315 (PEEMRRQRLHRFDGQ) is VCP/p97-interacting motif (VIM).

The protein belongs to the peptidase S54 family. Interacts with BIK and STEAP3. Interacts (via C-terminal domain) with VCP/P97. Interacts with ubiquitin and ubiquitinated proteins. Expressed in testis (at protein level). Expressed in intestine, lung, brain, kidney, epididymis, stomach, muscle, spleen, liver, heart and testis.

It localises to the endoplasmic reticulum membrane. Its subcellular location is the mitochondrion membrane. It carries out the reaction Cleaves type-1 transmembrane domains using a catalytic dyad composed of serine and histidine that are contributed by different transmembrane domains.. Inhibited by aprotinin. Intramembrane-cleaving serine protease that cleaves single transmembrane or multi-pass membrane proteins in the hydrophobic plane of the membrane, luminal loops and juxtamembrane regions. Involved in regulated intramembrane proteolysis and the subsequent release of functional polypeptides from their membrane anchors. Functional component of endoplasmic reticulum-associated degradation (ERAD) for misfolded membrane proteins. Required for the degradation process of some specific misfolded endoplasmic reticulum (ER) luminal proteins. Participates in the transfer of misfolded proteins from the ER to the cytosol, where they are destroyed by the proteasome in a ubiquitin-dependent manner. Functions in BIK, MPZ, PKD1, PTCRA, RHO, STEAP3 and TRAC processing. Involved in the regulation of exosomal secretion; inhibits the TSAP6-mediated secretion pathway. Involved in the regulation of apoptosis; modulates BIK-mediated apoptotic activity. Also plays a role in the regulation of spermatogenesis; inhibits apoptotic activity in spermatogonia. The protein is Rhomboid-related protein 4 (Rhbdd1) of Mus musculus (Mouse).